Here is a 154-residue protein sequence, read N- to C-terminus: MIDPAQSILDIRQILGLLPHRYPFLLVDRVVEYVPGDYIKAYKNVTMNEPFFQGHFPGVPVMPGVLIMEALAQAGGILVVKSTDTAVEDKLFLFTGIESVRFRKPVYPGDKLELHCRLLKHKLKLWKMEGRAYVDGKLAAEAVMTAAVTNREDM.

Residue His-55 is part of the active site.

This sequence belongs to the thioester dehydratase family. FabZ subfamily.

It localises to the cytoplasm. It catalyses the reaction a (3R)-hydroxyacyl-[ACP] = a (2E)-enoyl-[ACP] + H2O. In terms of biological role, involved in unsaturated fatty acids biosynthesis. Catalyzes the dehydration of short chain beta-hydroxyacyl-ACPs and long chain saturated and unsaturated beta-hydroxyacyl-ACPs. This is 3-hydroxyacyl-[acyl-carrier-protein] dehydratase FabZ from Nitratidesulfovibrio vulgaris (strain ATCC 29579 / DSM 644 / CCUG 34227 / NCIMB 8303 / VKM B-1760 / Hildenborough) (Desulfovibrio vulgaris).